We begin with the raw amino-acid sequence, 443 residues long: tRNA modification GTPase MnmE (443 aa).

(6S)-5-formyl-5,6,7,8-tetrahydrofolate-binding residues include arginine 19, glutamate 78, and lysine 118. Residues glycine 214–lysine 366 form the TrmE-type G domain. Residue asparagine 224 participates in K(+) binding. GTP-binding positions include asparagine 224 to serine 229, serine 243 to threonine 249, and aspartate 268 to glycine 271. Serine 228 is a Mg(2+) binding site. K(+)-binding residues include serine 243, isoleucine 245, and threonine 248. Threonine 249 serves as a coordination point for Mg(2+). Lysine 443 is a binding site for (6S)-5-formyl-5,6,7,8-tetrahydrofolate.

Belongs to the TRAFAC class TrmE-Era-EngA-EngB-Septin-like GTPase superfamily. TrmE GTPase family. Homodimer. Heterotetramer of two MnmE and two MnmG subunits. It depends on K(+) as a cofactor.

It is found in the cytoplasm. Functionally, exhibits a very high intrinsic GTPase hydrolysis rate. Involved in the addition of a carboxymethylaminomethyl (cmnm) group at the wobble position (U34) of certain tRNAs, forming tRNA-cmnm(5)s(2)U34. This chain is tRNA modification GTPase MnmE, found in Pelagibacter ubique (strain HTCC1062).